Here is a 189-residue protein sequence, read N- to C-terminus: MARSFSLLMVVLVLSYKSICSLGCDLPQTHSLRNRRALILLAQMGRISPFSCLKDRHEFRFPEEEFDGHQFQKTQAISVLHEMIQQTFNLFSTEDSSAAWEQSLLEKFSTELYQQLNDLEACVIQEVGVEETPLMNEDFILAVRKYFQRITLYLMEKKYSPCAWEVVRAEIMRSFSFSTNLKKGLRRKD.

The signal sequence occupies residues 1–23 (MARSFSLLMVVLVLSYKSICSLG). 2 cysteine pairs are disulfide-bonded: cysteine 24/cysteine 122 and cysteine 52/cysteine 162.

The protein belongs to the alpha/beta interferon family.

The protein resides in the secreted. Its function is as follows. Produced by macrophages, IFN-alpha have antiviral activities. Interferon stimulates the production of two enzymes: a protein kinase and an oligoadenylate synthetase. The polypeptide is Interferon alpha-7 (IFNA7) (Homo sapiens (Human)).